The chain runs to 752 residues: Ribosomal RNA large subunit methyltransferase K/L (752 aa).

Residues 53–164 (QMYKICLWTR…RDELHISIDL (112 aa)) enclose the THUMP domain.

This sequence belongs to the methyltransferase superfamily. RlmKL family.

It is found in the cytoplasm. The enzyme catalyses guanosine(2445) in 23S rRNA + S-adenosyl-L-methionine = N(2)-methylguanosine(2445) in 23S rRNA + S-adenosyl-L-homocysteine + H(+). It carries out the reaction guanosine(2069) in 23S rRNA + S-adenosyl-L-methionine = N(2)-methylguanosine(2069) in 23S rRNA + S-adenosyl-L-homocysteine + H(+). Its function is as follows. Specifically methylates the guanine in position 2445 (m2G2445) and the guanine in position 2069 (m7G2069) of 23S rRNA. The polypeptide is Ribosomal RNA large subunit methyltransferase K/L (Saccharophagus degradans (strain 2-40 / ATCC 43961 / DSM 17024)).